Reading from the N-terminus, the 185-residue chain is Large ribosomal subunit protein uL5 (185 aa).

This sequence belongs to the universal ribosomal protein uL5 family. Part of the 50S ribosomal subunit; part of the 5S rRNA/L5/L18/L25 subcomplex. Contacts the 5S rRNA and the P site tRNA. Forms a bridge to the 30S subunit in the 70S ribosome.

Its function is as follows. This is one of the proteins that bind and probably mediate the attachment of the 5S RNA into the large ribosomal subunit, where it forms part of the central protuberance. In the 70S ribosome it contacts protein S13 of the 30S subunit (bridge B1b), connecting the 2 subunits; this bridge is implicated in subunit movement. Contacts the P site tRNA; the 5S rRNA and some of its associated proteins might help stabilize positioning of ribosome-bound tRNAs. The sequence is that of Large ribosomal subunit protein uL5 from Rhodopseudomonas palustris (strain HaA2).